A 249-amino-acid polypeptide reads, in one-letter code: Triosephosphate isomerase (249 aa).

9-11 (NWK) provides a ligand contact to substrate. His94 (electrophile) is an active-site residue. Glu166 functions as the Proton acceptor in the catalytic mechanism. Substrate-binding positions include Gly172 and 232 to 233 (GG).

Belongs to the triosephosphate isomerase family. In terms of assembly, homodimer.

The protein localises to the cytoplasm. The catalysed reaction is D-glyceraldehyde 3-phosphate = dihydroxyacetone phosphate. The protein operates within carbohydrate biosynthesis; gluconeogenesis. It functions in the pathway carbohydrate degradation; glycolysis; D-glyceraldehyde 3-phosphate from glycerone phosphate: step 1/1. In terms of biological role, involved in the gluconeogenesis. Catalyzes stereospecifically the conversion of dihydroxyacetone phosphate (DHAP) to D-glyceraldehyde-3-phosphate (G3P). This Xylella fastidiosa (strain 9a5c) protein is Triosephosphate isomerase.